The sequence spans 248 residues: 4-hydroxy-tetrahydrodipicolinate reductase (248 aa).

NAD(+)-binding positions include Asp32, 74 to 76 (GTT), and 99 to 102 (SANF). The active-site Proton donor/acceptor is His134. Residue His135 coordinates (S)-2,3,4,5-tetrahydrodipicolinate. The active-site Proton donor is Lys138. Position 144–145 (144–145 (GT)) interacts with (S)-2,3,4,5-tetrahydrodipicolinate.

Belongs to the DapB family.

The protein localises to the cytoplasm. It catalyses the reaction (S)-2,3,4,5-tetrahydrodipicolinate + NAD(+) + H2O = (2S,4S)-4-hydroxy-2,3,4,5-tetrahydrodipicolinate + NADH + H(+). The catalysed reaction is (S)-2,3,4,5-tetrahydrodipicolinate + NADP(+) + H2O = (2S,4S)-4-hydroxy-2,3,4,5-tetrahydrodipicolinate + NADPH + H(+). It participates in amino-acid biosynthesis; L-lysine biosynthesis via DAP pathway; (S)-tetrahydrodipicolinate from L-aspartate: step 4/4. In terms of biological role, catalyzes the conversion of 4-hydroxy-tetrahydrodipicolinate (HTPA) to tetrahydrodipicolinate. The protein is 4-hydroxy-tetrahydrodipicolinate reductase of Chlorobium limicola (strain DSM 245 / NBRC 103803 / 6330).